The following is a 448-amino-acid chain: Histidinol dehydrogenase (448 aa).

NAD(+)-binding residues include Tyr136, Gln197, and Asn220. Substrate-binding residues include Ser243, Gln265, and His268. Zn(2+) contacts are provided by Gln265 and His268. Active-site proton acceptor residues include Glu333 and His334. Residues His334, Asp367, Glu421, and His426 each contribute to the substrate site. Asp367 contributes to the Zn(2+) binding site. Position 426 (His426) interacts with Zn(2+).

Belongs to the histidinol dehydrogenase family. It depends on Zn(2+) as a cofactor.

The catalysed reaction is L-histidinol + 2 NAD(+) + H2O = L-histidine + 2 NADH + 3 H(+). It functions in the pathway amino-acid biosynthesis; L-histidine biosynthesis; L-histidine from 5-phospho-alpha-D-ribose 1-diphosphate: step 9/9. Functionally, catalyzes the sequential NAD-dependent oxidations of L-histidinol to L-histidinaldehyde and then to L-histidine. The chain is Histidinol dehydrogenase from Pseudomonas savastanoi pv. phaseolicola (strain 1448A / Race 6) (Pseudomonas syringae pv. phaseolicola (strain 1448A / Race 6)).